Here is a 426-residue protein sequence, read N- to C-terminus: Serine--tRNA ligase (426 aa).

The disordered stretch occupies residues 36–66; that stretch reads KRRHLQERTQDLQSQRNTISKEIGQKKAKGE. Over residues 46–55 the composition is skewed to polar residues; it reads DLQSQRNTIS. Residue 233–235 participates in L-serine binding; that stretch reads TAE. ATP is bound at residue 264–266; the sequence is RSE. Position 287 (Glu-287) interacts with L-serine. An ATP-binding site is contributed by 351 to 354; the sequence is EISS. Ser-387 is a binding site for L-serine.

Belongs to the class-II aminoacyl-tRNA synthetase family. Type-1 seryl-tRNA synthetase subfamily. Homodimer. The tRNA molecule binds across the dimer.

The protein localises to the cytoplasm. It carries out the reaction tRNA(Ser) + L-serine + ATP = L-seryl-tRNA(Ser) + AMP + diphosphate + H(+). The enzyme catalyses tRNA(Sec) + L-serine + ATP = L-seryl-tRNA(Sec) + AMP + diphosphate + H(+). Its pathway is aminoacyl-tRNA biosynthesis; selenocysteinyl-tRNA(Sec) biosynthesis; L-seryl-tRNA(Sec) from L-serine and tRNA(Sec): step 1/1. Its function is as follows. Catalyzes the attachment of serine to tRNA(Ser). Is also able to aminoacylate tRNA(Sec) with serine, to form the misacylated tRNA L-seryl-tRNA(Sec), which will be further converted into selenocysteinyl-tRNA(Sec). The chain is Serine--tRNA ligase from Francisella tularensis subsp. novicida (strain U112).